Consider the following 389-residue polypeptide: GDSL esterase/lipase At5g14450 (389 aa).

The signal sequence occupies residues 1–30 (MKDNLERAKLMVSSTVFSWLLLCLFAVTTS). The Nucleophile role is filled by serine 48. 2 N-linked (GlcNAc...) asparagine glycosylation sites follow: asparagine 125 and asparagine 335. Active-site residues include aspartate 354 and histidine 357.

It belongs to the 'GDSL' lipolytic enzyme family.

It localises to the secreted. The chain is GDSL esterase/lipase At5g14450 from Arabidopsis thaliana (Mouse-ear cress).